The primary structure comprises 206 residues: Ribonuclease HII (206 aa).

The RNase H type-2 domain maps to 1 to 206 (MKVLGIDEAG…SWATVQKKKQ (206 aa)). D7, E8, and D105 together coordinate a divalent metal cation.

This sequence belongs to the RNase HII family. Mn(2+) serves as cofactor. The cofactor is Mg(2+).

The protein localises to the cytoplasm. The catalysed reaction is Endonucleolytic cleavage to 5'-phosphomonoester.. Its function is as follows. Endonuclease that specifically degrades the RNA of RNA-DNA hybrids. The polypeptide is Ribonuclease HII (rnhB) (Methanothermobacter thermautotrophicus (strain ATCC 29096 / DSM 1053 / JCM 10044 / NBRC 100330 / Delta H) (Methanobacterium thermoautotrophicum)).